The chain runs to 60 residues: Toxin S4C8 (60 aa).

4 disulfides stabilise this stretch: Cys3/Cys22, Cys17/Cys39, Cys41/Cys52, and Cys53/Cys58. Residues 41–48 (CPTAMWPY) are important for binding to L-type calcium channels.

It belongs to the three-finger toxin family. Short-chain subfamily. L-type calcium blocker sub-subfamily. As to expression, expressed by the venom gland.

Its subcellular location is the secreted. This specific blocker of the L-type calcium channel (Cav1/CACNA1) is a smooth muscle relaxant and an inhibitor of cardiac contractions. This chain is Toxin S4C8, found in Dendroaspis jamesoni kaimosae (Eastern Jameson's mamba).